The sequence spans 516 residues: Cysteine--tRNA ligase (516 aa).

Cys34 contacts Zn(2+). The 'HIGH' region signature appears at Pro36–Asn46. Zn(2+) is bound by residues Cys225, His250, and Glu254. The 'KMSKS' region motif lies at Lys285–Ser289. Lys288 is a binding site for ATP.

This sequence belongs to the class-I aminoacyl-tRNA synthetase family. Monomer. The cofactor is Zn(2+).

Its subcellular location is the cytoplasm. It carries out the reaction tRNA(Cys) + L-cysteine + ATP = L-cysteinyl-tRNA(Cys) + AMP + diphosphate. This Zymomonas mobilis subsp. mobilis (strain ATCC 31821 / ZM4 / CP4) protein is Cysteine--tRNA ligase.